The sequence spans 246 residues: V-type proton ATPase subunit D 1 (246 aa).

The protein belongs to the V-ATPase D subunit family. In terms of assembly, V-ATPase is a heteromultimeric enzyme made up of two complexes: the ATP-hydrolytic V1 complex and the proton translocation V0 complex. The V1 complex consists of three catalytic AB heterodimers that form a heterohexamer, three peripheral stalks each consisting of EG heterodimers, one central rotor including subunits D and F, and the regulatory subunits C and H. The proton translocation complex V0 consists of the proton transport subunit a, a ring of proteolipid subunits c9c'', rotary subunit d, subunits e and f, and the accessory subunits VhaAC45 and ATP6AP2.

Subunit of the V1 complex of vacuolar(H+)-ATPase (V-ATPase), a multisubunit enzyme composed of a peripheral complex (V1) that hydrolyzes ATP and a membrane integral complex (V0) that translocates protons. V-ATPase is responsible for acidifying and maintaining the pH of intracellular compartments and in some cell types, is targeted to the plasma membrane, where it is responsible for acidifying the extracellular environment. This is V-type proton ATPase subunit D 1 (Vha36-1) from Drosophila melanogaster (Fruit fly).